The following is a 225-amino-acid chain: Pre-mRNA-splicing factor SPF27 (225 aa).

An N-acetylalanine modification is found at Ala-2. Ser-94 carries the post-translational modification Phosphoserine. A coiled-coil region spans residues 138–222; it reads YNENLVHMIE…HGEANKENIR (85 aa).

It belongs to the SPF27 family. In terms of assembly, component of the pre-catalytic and catalytic spliceosome complexes. Component of the postcatalytic spliceosome P complex. Component of the PRP19-CDC5L splicing complex composed of a core complex comprising a homotetramer of PRPF19, CDC5L, PLRG1 and BCAS2, and at least three less stably associated proteins CTNNBL1, CWC15 and HSPA8. Interacts directly in the complex with PRPF19, CDC5L and PLRG1. Ubiquitously expressed.

Its subcellular location is the nucleus. It is found in the nucleolus. Functionally, required for pre-mRNA splicing as component of the activated spliceosome. Component of the PRP19-CDC5L complex that forms an integral part of the spliceosome and is required for activating pre-mRNA splicing. May have a scaffolding role in the spliceosome assembly as it contacts all other components of the core complex. The PRP19-CDC5L complex may also play a role in the response to DNA damage (DDR). The polypeptide is Pre-mRNA-splicing factor SPF27 (BCAS2) (Homo sapiens (Human)).